The sequence spans 132 residues: uncharacterized protein (132 aa).

The first 17 residues, methionine 1–alanine 17, serve as a signal peptide directing secretion. Residues serine 25 to serine 39 show a composition bias toward low complexity. Residues serine 25–arginine 79 are disordered.

This is an uncharacterized protein from Escherichia coli (strain K12).